The following is a 360-amino-acid chain: Peptide chain release factor 1 (360 aa).

Position 235 is an N5-methylglutamine (Gln235). Basic and acidic residues predominate over residues 281 to 307 (ERQRADSERSADRRSQVGSGDRSERIR). The tract at residues 281-311 (ERQRADSERSADRRSQVGSGDRSERIRTYNF) is disordered.

Belongs to the prokaryotic/mitochondrial release factor family. Methylated by PrmC. Methylation increases the termination efficiency of RF1.

It is found in the cytoplasm. Peptide chain release factor 1 directs the termination of translation in response to the peptide chain termination codons UAG and UAA. The protein is Peptide chain release factor 1 of Rhizobium meliloti (strain 1021) (Ensifer meliloti).